Here is a 364-residue protein sequence, read N- to C-terminus: UDP-N-acetylglucosamine--N-acetylmuramyl-(pentapeptide) pyrophosphoryl-undecaprenol N-acetylglucosamine transferase (364 aa).

UDP-N-acetyl-alpha-D-glucosamine is bound by residues 10 to 12, Asn-124, Arg-166, Ser-196, and Gln-297; that span reads TGG.

It belongs to the glycosyltransferase 28 family. MurG subfamily.

The protein resides in the cell membrane. The enzyme catalyses di-trans,octa-cis-undecaprenyl diphospho-N-acetyl-alpha-D-muramoyl-L-alanyl-D-glutamyl-meso-2,6-diaminopimeloyl-D-alanyl-D-alanine + UDP-N-acetyl-alpha-D-glucosamine = di-trans,octa-cis-undecaprenyl diphospho-[N-acetyl-alpha-D-glucosaminyl-(1-&gt;4)]-N-acetyl-alpha-D-muramoyl-L-alanyl-D-glutamyl-meso-2,6-diaminopimeloyl-D-alanyl-D-alanine + UDP + H(+). The protein operates within cell wall biogenesis; peptidoglycan biosynthesis. In terms of biological role, cell wall formation. Catalyzes the transfer of a GlcNAc subunit on undecaprenyl-pyrophosphoryl-MurNAc-pentapeptide (lipid intermediate I) to form undecaprenyl-pyrophosphoryl-MurNAc-(pentapeptide)GlcNAc (lipid intermediate II). The polypeptide is UDP-N-acetylglucosamine--N-acetylmuramyl-(pentapeptide) pyrophosphoryl-undecaprenol N-acetylglucosamine transferase (Caldanaerobacter subterraneus subsp. tengcongensis (strain DSM 15242 / JCM 11007 / NBRC 100824 / MB4) (Thermoanaerobacter tengcongensis)).